We begin with the raw amino-acid sequence, 308 residues long: Aspartate carbamoyltransferase catalytic subunit (308 aa).

Carbamoyl phosphate-binding residues include arginine 55 and threonine 56. An L-aspartate-binding site is contributed by lysine 83. Residues arginine 105, histidine 133, and glutamine 136 each coordinate carbamoyl phosphate. Positions 166 and 220 each coordinate L-aspartate. Glycine 261 and proline 262 together coordinate carbamoyl phosphate.

The protein belongs to the aspartate/ornithine carbamoyltransferase superfamily. ATCase family. Heterododecamer (2C3:3R2) of six catalytic PyrB chains organized as two trimers (C3), and six regulatory PyrI chains organized as three dimers (R2).

The catalysed reaction is carbamoyl phosphate + L-aspartate = N-carbamoyl-L-aspartate + phosphate + H(+). It participates in pyrimidine metabolism; UMP biosynthesis via de novo pathway; (S)-dihydroorotate from bicarbonate: step 2/3. Functionally, catalyzes the condensation of carbamoyl phosphate and aspartate to form carbamoyl aspartate and inorganic phosphate, the committed step in the de novo pyrimidine nucleotide biosynthesis pathway. This Chlorobaculum parvum (strain DSM 263 / NCIMB 8327) (Chlorobium vibrioforme subsp. thiosulfatophilum) protein is Aspartate carbamoyltransferase catalytic subunit.